Here is a 141-residue protein sequence, read N- to C-terminus: Large ribosomal subunit protein uL11 (141 aa).

This sequence belongs to the universal ribosomal protein uL11 family. As to quaternary structure, part of the ribosomal stalk of the 50S ribosomal subunit. Interacts with L10 and the large rRNA to form the base of the stalk. L10 forms an elongated spine to which L12 dimers bind in a sequential fashion forming a multimeric L10(L12)X complex. In terms of processing, one or more lysine residues are methylated.

Functionally, forms part of the ribosomal stalk which helps the ribosome interact with GTP-bound translation factors. In Amoebophilus asiaticus (strain 5a2), this protein is Large ribosomal subunit protein uL11.